A 441-amino-acid polypeptide reads, in one-letter code: Ribosomal protein uS12 methylthiotransferase RimO (441 aa).

In terms of domain architecture, MTTase N-terminal spans 8-118 (PKIGFVSLGC…VLQHVHHYVP (111 aa)). Residues Cys17, Cys53, Cys82, Cys150, Cys154, and Cys157 each contribute to the [4Fe-4S] cluster site. In terms of domain architecture, Radical SAM core spans 136–373 (LTPRHYAYLK…MALQQQISAE (238 aa)). The TRAM domain maps to 376 to 441 (QEKVGREILV…DEYDLWGSLV (66 aa)).

This sequence belongs to the methylthiotransferase family. RimO subfamily. [4Fe-4S] cluster serves as cofactor.

It localises to the cytoplasm. It carries out the reaction L-aspartate(89)-[ribosomal protein uS12]-hydrogen + (sulfur carrier)-SH + AH2 + 2 S-adenosyl-L-methionine = 3-methylsulfanyl-L-aspartate(89)-[ribosomal protein uS12]-hydrogen + (sulfur carrier)-H + 5'-deoxyadenosine + L-methionine + A + S-adenosyl-L-homocysteine + 2 H(+). Functionally, catalyzes the methylthiolation of an aspartic acid residue of ribosomal protein uS12. This Cronobacter sakazakii (strain ATCC BAA-894) (Enterobacter sakazakii) protein is Ribosomal protein uS12 methylthiotransferase RimO.